The following is a 1140-amino-acid chain: Chromosome partition protein Smc (1140 aa).

34 to 41 (PNGSGKSN) provides a ligand contact to ATP. Residues 160–484 (VDQFDSEIER…EKEASAKIAS (325 aa)) are a coiled coil. In terms of domain architecture, SMC hinge spans 502–619 (EGVIGLVRDL…VQDIDAGRRL (118 aa)). Residues 660–990 (LEGMKIQLSS…MLNEKKREVF (331 aa)) adopt a coiled-coil conformation.

The protein belongs to the SMC family. In terms of assembly, homodimer.

It is found in the cytoplasm. Its function is as follows. Required for chromosome condensation and partitioning. This Thermoplasma acidophilum (strain ATCC 25905 / DSM 1728 / JCM 9062 / NBRC 15155 / AMRC-C165) protein is Chromosome partition protein Smc.